The sequence spans 352 residues: Ion-translocating oxidoreductase complex subunit D (352 aa).

The next 4 helical transmembrane spans lie at isoleucine 20–glycine 40, glycine 42–leucine 62, valine 69–proline 91, and proline 123–leucine 143. FMN phosphoryl threonine is present on threonine 187. Transmembrane regions (helical) follow at residues leucine 215 to leucine 235, tryptophan 242 to phenylalanine 262, leucine 267 to leucine 287, leucine 301 to proline 321, and aspartate 322 to threonine 342.

This sequence belongs to the NqrB/RnfD family. In terms of assembly, the complex is composed of six subunits: RsxA, RsxB, RsxC, RsxD, RsxE and RsxG. FMN is required as a cofactor.

It is found in the cell inner membrane. In terms of biological role, part of a membrane-bound complex that couples electron transfer with translocation of ions across the membrane. Required to maintain the reduced state of SoxR. This is Ion-translocating oxidoreductase complex subunit D from Salmonella choleraesuis (strain SC-B67).